Here is a 1802-residue protein sequence, read N- to C-terminus: Protein TIC 214 (1802 aa).

6 helical membrane passes run 19–39 (IINS…FSIG), 68–88 (FIAG…HLAL), 91–111 (PHTI…WNNH), 133–153 (VFLN…SSML), 176–196 (VGWL…LVWI), and 227–247 (IFSI…PSPI).

The protein belongs to the TIC214 family. Part of the Tic complex.

It localises to the plastid. Its subcellular location is the chloroplast inner membrane. Functionally, involved in protein precursor import into chloroplasts. May be part of an intermediate translocation complex acting as a protein-conducting channel at the inner envelope. The chain is Protein TIC 214 from Nasturtium officinale (Watercress).